The following is a 90-amino-acid chain: Photosystem I reaction center subunit PsaK 2 (90 aa).

2 helical membrane-spanning segments follow: residues 20–42 and 67–89; these read LSVG…FAIQ and LATM…SSGI.

The protein belongs to the PsaG/PsaK family.

Its subcellular location is the cellular thylakoid membrane. This is Photosystem I reaction center subunit PsaK 2 (psaK2) from Synechocystis sp. (strain ATCC 27184 / PCC 6803 / Kazusa).